The sequence spans 208 residues: TM2 domain-containing protein 1 (208 aa).

The signal sequence occupies residues 1 to 37 (MAAAWPAGRASPAAGPPGLLRTLWLVTVAAGHCGAAA). Residues 38–129 (SGAVGGEETP…YSYKVAVALS (92 aa)) are Extracellular-facing. Asn73, Asn76, and Asn97 each carry an N-linked (GlcNAc...) asparagine glycan. A TM2 domain is found at 119–167 (GYSYKVAVALSLFLGWLGADRFYLGYPALGLLKFCTVGFCGIGSLIDFI). The chain crosses the membrane as a helical span at residues 130–150 (LFLGWLGADRFYLGYPALGLL). Residues 151–154 (KFCT) are Cytoplasmic-facing. Residues 155–175 (VGFCGIGSLIDFILISMQIVG) traverse the membrane as a helical segment. At 176–208 (PSDGSSYIIDYYGTRLTRLSITNETFRKTQLYP) the chain is on the extracellular side. The N-linked (GlcNAc...) asparagine glycan is linked to Asn198.

Belongs to the TM2 family. As to quaternary structure, interacts with APP beta-APP42 (amyloid-beta protein 42). N-glycosylated.

Its subcellular location is the membrane. In terms of biological role, may participate in amyloid-beta-induced apoptosis via its interaction with beta-APP42. This is TM2 domain-containing protein 1 (Tm2d1) from Mus musculus (Mouse).